The following is a 442-amino-acid chain: D-serine dehydratase (442 aa).

Lys-118 is modified (N6-(pyridoxal phosphate)lysine).

This sequence belongs to the serine/threonine dehydratase family. DsdA subfamily. In terms of assembly, monomer. Pyridoxal 5'-phosphate is required as a cofactor.

The catalysed reaction is D-serine = pyruvate + NH4(+). This Escherichia coli (strain 55989 / EAEC) protein is D-serine dehydratase.